The chain runs to 400 residues: Integumentary mucin A.1 (400 aa).

An N-terminal signal peptide occupies residues 1 to 20 (MKHIILCIHFLLMVVGLGQA). 2 consecutive P-type domains span residues 21–64 (QDCS…FYNA) and 72–115 (LECS…YART). 3 disulfides stabilise this stretch: cysteine 23–cysteine 49, cysteine 33–cysteine 48, and cysteine 43–cysteine 60. A glycan (N-linked (GlcNAc...) asparagine) is linked at asparagine 63. Intrachain disulfides connect cysteine 74/cysteine 100, cysteine 84/cysteine 99, and cysteine 94/cysteine 111. Composition is skewed to low complexity over residues 122–264 (PDTT…DTTP) and 272–299 (ETTTETTTETTTETTTETTTETTTETTT). The disordered stretch occupies residues 122–302 (PDTTTASTTA…TTTETTTAPP (181 aa)). 14 consecutive repeat copies span residues 127–135 (ASTTAETTT), 136–144 (VPTTPETTT), 145–153 (VPTTPETTT), 154–162 (VPTTPETTT), 163–171 (VPTTPETTT), 172–180 (VPTTPETTT), 181–189 (VPTTPETTT), 190–198 (VPTTPETTT), 199–207 (VPTTPETTT), 208–216 (VPTTPETTT), 217–225 (VPTTPETTT), 226–234 (VPTTPETTT), 235–243 (ASTTAETTT), and 244–252 (VPTTPETTT). The tract at residues 127–261 (ASTTAETTTV…TEPTTTPTTD (135 aa)) is 15 X 9 AA approximate tandem repeats of [AV]-[SP]-T-T-[AP]-E-T-T-T. The 1-15; approximate repeat unit spans residues 253–261 (EPTTTPTTD). 7 repeat units span residues 272-275 (ETTT), 276-279 (ETTT), 280-283 (ETTT), 284-287 (ETTT), 288-291 (ETTT), 292-295 (ETTT), and 296-299 (ETTT). The tract at residues 272–299 (ETTTETTTETTTETTTETTTETTTETTT) is 7 X 4 AA repeats of E-T-T-T. P-type domains are found at residues 298-343 (TTAP…FYTE) and 351-394 (AECT…FEKA). Cystine bridges form between cysteine 312–cysteine 327, cysteine 322–cysteine 339, cysteine 353–cysteine 379, cysteine 363–cysteine 378, and cysteine 373–cysteine 390.

Extensively O-glycosylated. Consist of about 70% carbohydrate and 30% protein. In terms of tissue distribution, expressed and stored exclusively in mature mucous glands of the skin.

Its subcellular location is the secreted. Its function is as follows. Could be involved in defense against microbial infections. Protects the epithelia from external environment. The sequence is that of Integumentary mucin A.1 from Xenopus laevis (African clawed frog).